We begin with the raw amino-acid sequence, 831 residues long: Protein ADP-ribosyltransferase PARP3 (831 aa).

A disordered region spans residues 1 to 69 (MVHETRSRTL…KKLKAEESDL (69 aa)). 2 stretches are compositionally biased toward basic and acidic residues: residues 15-32 (EEGKAAPKKQKTESKEQE) and 43-66 (KTADNEEHDGEQEPSKNKKLKAEE). Positions 49-199 (EHDGEQEPSK…NKYPKRNLDD (151 aa)) constitute a PADR1 zinc-binding domain. The interval 124–168 (GPLDKCPVCGGQLECKGLKYNCTGTHSEWACCSFSTNNPSRRGGP) is zinc ribbon. Cys-129, Cys-132, Cys-145, and Cys-155 together coordinate Zn(2+). One can recognise a BRCT domain in the interval 200-290 (EGIFSGMMIA…EKQPLAAYDI (91 aa)). The WGR domain occupies 338 to 439 (GGHIYEKDGI…KKFKKKCMKM (102 aa)). Residues 466-585 (HCKLDPSVTF…DINVASRLIG (120 aa)) form the PARP alpha-helical domain. Residues 594 to 827 (DPLSQCYKKL…VKYEEQNMEV (234 aa)) enclose the PARP catalytic domain.

This sequence belongs to the ARTD/PARP family.

It localises to the nucleus. It carries out the reaction L-aspartyl-[protein] + NAD(+) = 4-O-(ADP-D-ribosyl)-L-aspartyl-[protein] + nicotinamide. The enzyme catalyses L-glutamyl-[protein] + NAD(+) = 5-O-(ADP-D-ribosyl)-L-glutamyl-[protein] + nicotinamide. In terms of biological role, involved in the base excision repair (BER) pathway, by catalyzing the poly(ADP-ribosyl)ation of a limited number of acceptor proteins involved in chromatin architecture and in DNA metabolism. This modification follows DNA damages and appears as an obligatory step in a detection/signaling pathway leading to the reparation of DNA strand breaks. The chain is Protein ADP-ribosyltransferase PARP3 (PARP3) from Oryza sativa subsp. japonica (Rice).